A 495-amino-acid polypeptide reads, in one-letter code: UPF0371 protein cgR_2887 (495 aa).

This sequence belongs to the UPF0371 family.

The sequence is that of UPF0371 protein cgR_2887 from Corynebacterium glutamicum (strain R).